A 659-amino-acid chain; its full sequence is MKIKNYFIIVFIIIVLSTDVISSQSSIEDKMYTSLNSYPCTRIMTLNGQIGCSSSHGGDSGILYLIDSDESYHNYFSYNQQKDIIVVFDSNYFNKTLVLEMYSKKKMNGALVLTDIGKTYPYSPEDQYPIKQFGLYPDSNLNWNPNGDGFTYMNFPFPMFALELKTSIIIRNLSTINRDGKYPAYGAELDSFMQGAINAETCLRRGFCEPVGGQSIWSSFSEVIDQSKPIILVMLPIDATAFFRDLATGTDQSGYALTVLLSMLNTLQGVDKTKWDKEVIFAMWNSERWGYVGSTNFVNDLLNFNCTSLDSNNQNSCSSPPMLDLTFEQIKFENIYAIIEFNQIGRPVNSGKKTPNKLDIYNLVFHPNGGAGANQLMDVFSQSTQSYENSTIQFQKTTQNELPPCSSMSFIKEINKKSAPNFIGTLVITDHDYQYNNPYFGDEQDNSGNINTTTSTLFDMVQVFSKSIDLLAGGNGTVKVDDLFIREINVCLTQSITCNWVTKLMSTFPYNPIPNFYSGVYGVSPVNHITPIETRFIFRMATYLTQHRTNATNCTSDNDCDTSSSICVNKVCLYSNTHYHNAISLAFSFDNSKSSWTIVNTSYPVFVESNWDYTTVRLFQVGSYANEIWFLVSGLIELLLSVGIIFYIKKYLSKRYKLL.

The signal sequence occupies residues 1-22 (MKIKNYFIIVFIIIVLSTDVIS). The Extracellular segment spans residues 23-627 (SQSSIEDKMY…LFQVGSYANE (605 aa)). Residues Asn94, Asn172, Asn305, Asn389, Asn451, Asn475, Asn550, Asn553, and Asn600 are each glycosylated (N-linked (GlcNAc...) asparagine). Residues 628–648 (IWFLVSGLIELLLSVGIIFYI) traverse the membrane as a helical segment. Residues 649–659 (KKYLSKRYKLL) lie on the Cytoplasmic side of the membrane.

Belongs to the nicastrin family. As to quaternary structure, homodimer. Component of the gamma-secretase complex, a complex composed of a presenilin homodimer, nicastrin, aph1 and pen2.

It localises to the membrane. In terms of biological role, essential subunit of the gamma-secretase complex, an endoprotease complex that catalyzes the intramembrane cleavage of integral membrane proteins such as Notch receptors and APP (amyloid-beta precursor protein). It probably represents a stabilizing cofactor required for the assembly of the gamma-secretase complex. The sequence is that of Nicastrin (ncstn) from Dictyostelium discoideum (Social amoeba).